The following is a 333-amino-acid chain: Fe-S cluster assembly protein dre2 (333 aa).

The interval 1–29 (MSPITLDLTSDFNPANTTGAGSSSSQPRT) is disordered. Residues 7 to 28 (DLTSDFNPANTTGAGSSSSQPR) show a composition bias toward polar residues. The segment at 23–158 (SSSQPRTLLV…KPDYAEEEAV (136 aa)) is N-terminal SAM-like domain. The tract at residues 159-225 (PLRFGLKRKT…EDTLLTEADL (67 aa)) is linker. The [2Fe-2S] cluster site is built by cysteine 235, cysteine 246, cysteine 249, and cysteine 251. Residues 235 to 251 (CQPKPGKKRRACKDCTC) are fe-S binding site A. The [4Fe-4S] cluster site is built by cysteine 296, cysteine 299, cysteine 307, and cysteine 310. 2 consecutive short sequence motifs (cx2C motif) follow at residues 296-299 (CGSC) and 307-310 (CAGC). Positions 296–310 (CGSCALGDAFRCAGC) are fe-S binding site B.

It belongs to the anamorsin family. Monomer. Interacts with tah18. Interacts with mia40. The cofactor is [2Fe-2S] cluster. [4Fe-4S] cluster is required as a cofactor.

It is found in the cytoplasm. The protein resides in the mitochondrion intermembrane space. Component of the cytosolic iron-sulfur (Fe-S) protein assembly (CIA) machinery required for the maturation of extramitochondrial Fe-S proteins. Part of an electron transfer chain functioning in an early step of cytosolic Fe-S biogenesis, facilitating the de novo assembly of a [4Fe-4S] cluster on the scaffold complex cfd1-nbp35. Electrons are transferred to dre2 from NADPH via the FAD- and FMN-containing protein tah18. Tah18-dre2 are also required for the assembly of the diferric tyrosyl radical cofactor of ribonucleotide reductase (RNR), probably by providing electrons for reduction during radical cofactor maturation in the catalytic small subunit rnr2. In Neurospora crassa (strain ATCC 24698 / 74-OR23-1A / CBS 708.71 / DSM 1257 / FGSC 987), this protein is Fe-S cluster assembly protein dre2.